We begin with the raw amino-acid sequence, 363 residues long: Transcription factor IIIA (363 aa).

C2H2-type zinc fingers lie at residues 38–62 (FICSFPDCSASYNKAWKLDAHLCKH), 68–92 (FVCDYEGCGKAFIRDYHLSRHILIH), 98–123 (FVCADNGCNQKFSTKSNLKKHIERKH), 130–154 (YVCNFEGCKKAFKKHQQLRTHQCQH), 160–184 (FRCTHEGCGKHFASPSRLKRHGKVH), 187–211 (YLCQKGCSFVGKTWTELLKHTREAH), 215–237 (VTCTVCQKMFKRKDHLKQHMKTH), 244–269 (YRCPREGCARTYTTVFNLQSHILSFH), and 275–299 (FVCEHAGCGKTFAMKQSLMRHSVVH). The disordered stretch occupies residues 301-363 (PDKKRMKLKV…LAPAALLTVH (63 aa)). Positions 338-350 (SLPNSTESSSSPE) are enriched in low complexity.

The protein resides in the nucleus. Involved in ribosomal large subunit biogenesis. Binds the approximately 50 base pairs internal control region (ICR) of 5S ribosomal RNA genes. It is required for their RNA polymerase III-dependent transcription and may also maintain the transcription of other genes. Also binds the transcribed 5S RNA's. The polypeptide is Transcription factor IIIA (Gtf3a) (Rattus norvegicus (Rat)).